Consider the following 262-residue polypeptide: Nodulation protein J (262 aa).

In terms of domain architecture, ABC transmembrane type-2 spans 33 to 259; that stretch reads ASLLGNLADP…FASIALFRRR (227 aa). The next 7 membrane-spanning stretches (helical) occupy residues 37 to 57, 64 to 84, 102 to 122, 125 to 145, 149 to 169, 177 to 197, and 236 to 256; these read GNLADPITNLFGLGFGLGLIV, SYIAFLAAGMVAISAMTSATF, GILFTQLTLGDIVLGELVWAA, SVLAGTAIGIVAATLGYASWT, CAIPTIALTGLVFASLAMVVI, YFVFYQSLVLTPMVFLCGAVF, and LHVGALCVYAVLPFFASIALF.

It belongs to the ABC-2 integral membrane protein family. Lipooligosaccharide exporter (TC 3.A.1.102) subfamily. The complex is composed of two ATP-binding proteins (NodI) and two transmembrane proteins (NodJ).

Its subcellular location is the cell inner membrane. Part of the ABC transporter complex NodIJ involved in the export of the nodulation factors (Nod factors), the bacterial signal molecules that induce symbiosis and subsequent nodulation induction. Nod factors are LCO (lipo-chitin oligosaccharide), a modified beta-1,4-linked N-acetylglucosamine oligosaccharide. This subunit encodes the transporter. The sequence is that of Nodulation protein J (nodJ) from Bradyrhizobium diazoefficiens (strain JCM 10833 / BCRC 13528 / IAM 13628 / NBRC 14792 / USDA 110).